Consider the following 131-residue polypeptide: Histone H2A.1 (131 aa).

The residue at position 2 (Ser2) is an N-acetylserine. N6-acetyllysine is present on residues Lys4 and Lys7. N5-methylglutamine is present on Gln105. Residue Lys126 forms a Glycyl lysine isopeptide (Lys-Gly) (interchain with G-Cter in SUMO) linkage. Ser128 carries the post-translational modification Phosphoserine. The [ST]-Q motif motif lies at 128–129 (SQ).

It belongs to the histone H2A family. In terms of assembly, the nucleosome is a histone octamer containing two molecules each of H2A, H2B, H3 and H4 assembled in one H3-H4 heterotetramer and two H2A-H2B heterodimers. The octamer wraps approximately 147 bp of DNA. Phosphorylated to form H2AS128ph (gamma-H2A) in response to DNA double-strand breaks (DSBs) generated by exogenous genotoxic agents and by stalled replication forks. Phosphorylation is dependent on the DNA damage checkpoint kinases MEC1/ATR and TEL1/ATM, spreads on either side of a detected DSB site and may mark the surrounding chromatin for recruitment of proteins required for DNA damage signaling and repair. Gamma-H2A is removed from the DNA prior to the strand invasion-primer extension step of the repair process and subsequently dephosphorylated by PPH3, a component of the histone H2A phosphatase complex (HTP-C). Dephosphorylation is necessary for efficient recovery from the DNA damage checkpoint. Post-translationally, sumoylation on Lys-126 may lead to transcriptional repression. In terms of processing, acetylated by ESA1 to form H2AK4ac and H2AK7ac.

Its subcellular location is the nucleus. It localises to the chromosome. Its function is as follows. Core component of nucleosome which plays a central role in DNA double strand break (DSB) repair. Nucleosomes wrap and compact DNA into chromatin, limiting DNA accessibility to the cellular machineries which require DNA as a template. Histones thereby play a central role in transcription regulation, DNA repair, DNA replication and chromosomal stability. DNA accessibility is regulated via a complex set of post-translational modifications of histones, also called histone code, and nucleosome remodeling. In Eremothecium gossypii (strain ATCC 10895 / CBS 109.51 / FGSC 9923 / NRRL Y-1056) (Yeast), this protein is Histone H2A.1 (HTA1).